A 363-amino-acid chain; its full sequence is Putative dipeptidase YkvY (363 aa).

Mn(2+) is bound by residues Asp-222, Asp-233, His-297, Glu-326, and Glu-340.

This sequence belongs to the peptidase M24B family. Mn(2+) serves as cofactor.

This Bacillus subtilis (strain 168) protein is Putative dipeptidase YkvY (ykvY).